The following is a 398-amino-acid chain: Abhydrolase domain-containing protein 2 (398 aa).

The Cytoplasmic segment spans residues 1–4 (MSTA). The helical; Signal-anchor for type II membrane protein transmembrane segment at 5-22 (FLTLIAVIVCILFRILNV) threads the bilayer. Residues 23–398 (HSQPLKPSVW…MMHEVGKVAP (376 aa)) lie on the Extracellular side of the membrane. The 253-residue stretch at 113 to 365 (VAICPGIANS…HGGHLGFYEG (253 aa)) folds into the AB hydrolase-1 domain. Active-site charge relay system residues include S192, D328, and H359.

This sequence belongs to the AB hydrolase superfamily. AB hydrolase 4 family.

It localises to the membrane. This is Abhydrolase domain-containing protein 2 (Hydr2) from Drosophila melanogaster (Fruit fly).